A 248-amino-acid chain; its full sequence is Killer cell lectin-like receptor subfamily I member 1 (248 aa).

Over 1–80 the chain is Cytoplasmic; that stretch reads MLHSKRREYT…RQGPKSTVWR (80 aa). 2 short sequence motifs (ITIM motif) span residues 16–21 and 47–52; these read VTYTEL and LKYGEL. The helical; Signal-anchor for type II membrane protein transmembrane segment at 81 to 101 threads the bilayer; sequence VVTGMLGALCVVLMTTTGILL. Over 102 to 248 the chain is Extracellular; that stretch reads PKLFSSQEEQ…KKSYICEFNI (147 aa). 3 cysteine pairs are disulfide-bonded: Cys-132/Cys-145, Cys-161/Cys-244, and Cys-223/Cys-236. Residues 139 to 245 form the C-type lectin domain; sequence FGNNFYCVFK…CSAKKSYICE (107 aa). Asn-197, Asn-214, and Asn-220 each carry an N-linked (GlcNAc...) asparagine glycan.

Heterodimer with KLRE1. Interacts with PTPN6. Expressed in natural killer (NK) cells.

The protein resides in the cell membrane. Functionally, lectin-like receptor for natural killer (NK) cells. Heterodimer formation with KLRE1 mediates inhibition of NK cell cytolytic activity. In Mus musculus (Mouse), this protein is Killer cell lectin-like receptor subfamily I member 1.